Consider the following 121-residue polypeptide: Large ribosomal subunit protein uL14 (121 aa).

This sequence belongs to the universal ribosomal protein uL14 family. As to quaternary structure, part of the 50S ribosomal subunit. Forms a cluster with proteins L3 and L19. In the 70S ribosome, L14 and L19 interact and together make contacts with the 16S rRNA in bridges B5 and B8.

In terms of biological role, binds to 23S rRNA. Forms part of two intersubunit bridges in the 70S ribosome. The protein is Large ribosomal subunit protein uL14 of Synechococcus sp. (strain RCC307).